A 286-amino-acid polypeptide reads, in one-letter code: Polygalacturonan/rhamnogalacturonan transport system permease protein YtcP (286 aa).

6 helical membrane passes run 9-29 (LIYG…IHVI), 69-89 (LLVS…LSSL), 106-126 (MFLV…FLVV), 131-151 (LLDS…NLII), 176-196 (GIFF…ISLF), and 251-271 (TIKM…YPFI). The 203-residue stretch at 69-271 (LLVSVFVTVI…IPVLLVYPFI (203 aa)) folds into the ABC transmembrane type-1 domain.

This sequence belongs to the binding-protein-dependent transport system permease family. CysTW subfamily. The complex is probably composed of two ATP-binding proteins (MsmX), two transmembrane proteins (YtcP and YteP) and a solute-binding protein (YtcQ).

It is found in the cell membrane. Its function is as follows. Involved in pectin degradation. Part of the ABC transporter complex YtcQP-YteP involved in the uptake of polygalacturonan and rhamnogalacturonan type I. Responsible for the translocation of the substrate across the membrane. This Bacillus subtilis (strain 168) protein is Polygalacturonan/rhamnogalacturonan transport system permease protein YtcP (ytcP).